A 531-amino-acid polypeptide reads, in one-letter code: Cytochrome c oxidase subunit 1 (531 aa).

The chain crosses the membrane as a helical span at residues 18 to 38; sequence ILYLIYGMVSAMVATGMSVII. Ca(2+) contacts are provided by glutamate 41 and glycine 46. The next 6 helical transmembrane spans lie at 59 to 79, 103 to 123, 149 to 169, 185 to 205, 237 to 257, and 269 to 289; these read VLVT…ILIG, ISFW…LIET, AIFA…NFIV, PLFV…LPVL, LFYF…FGII, and IFGQ…GFLV. Fe(II)-heme a is bound at residue histidine 64. Histidine 243 contacts Cu cation. The 1'-histidyl-3'-tyrosine (His-Tyr) cross-link spans 243–247; sequence HPEVY. Tyrosine 247 provides a ligand contact to O2. Histidine 292 and histidine 293 together coordinate Cu cation. A run of 2 helical transmembrane segments spans residues 312-332 and 340-360; these read MVIA…LYGG and MLFA…GVML. Positions 370 and 371 each coordinate Mg(2+). A heme a3-binding site is contributed by histidine 378. Fe(II)-heme a is bound at residue histidine 380. 2 helical membrane passes run 385–405 and 414–434; these read MGAL…MFGL and VHYW…HFLG. Proline 443 contacts Ca(2+). A helical membrane pass occupies residues 458-478; the sequence is WGSIMSVISVLIGLYSVLVQL.

It belongs to the heme-copper respiratory oxidase family. In terms of assembly, component of the cytochrome c oxidase (complex IV, CIV), a multisubunit enzyme composed of a catalytic core of 3 subunits and several supernumerary subunits. The complex exists as a monomer or a dimer and forms supercomplexes (SCs) in the inner mitochondrial membrane with ubiquinol-cytochrome c oxidoreductase (cytochrome b-c1 complex, complex III, CIII). Heme serves as cofactor. It depends on Cu cation as a cofactor.

The protein localises to the mitochondrion inner membrane. The catalysed reaction is 4 Fe(II)-[cytochrome c] + O2 + 8 H(+)(in) = 4 Fe(III)-[cytochrome c] + 2 H2O + 4 H(+)(out). It participates in energy metabolism; oxidative phosphorylation. Functionally, component of the cytochrome c oxidase, the last enzyme in the mitochondrial electron transport chain which drives oxidative phosphorylation. The respiratory chain contains 3 multisubunit complexes succinate dehydrogenase (complex II, CII), ubiquinol-cytochrome c oxidoreductase (cytochrome b-c1 complex, complex III, CIII) and cytochrome c oxidase (complex IV, CIV), that cooperate to transfer electrons derived from NADH and succinate to molecular oxygen, creating an electrochemical gradient over the inner membrane that drives transmembrane transport and the ATP synthase. Cytochrome c oxidase is the component of the respiratory chain that catalyzes the reduction of oxygen to water. Electrons originating from reduced cytochrome c in the intermembrane space (IMS) are transferred via the dinuclear copper A center (CU(A)) of subunit 2 and heme A of subunit 1 to the active site in subunit 1, a binuclear center (BNC) formed by heme A3 and copper B (CU(B)). The BNC reduces molecular oxygen to 2 water molecules using 4 electrons from cytochrome c in the IMS and 4 protons from the mitochondrial matrix. This Candida albicans (strain SC5314 / ATCC MYA-2876) (Yeast) protein is Cytochrome c oxidase subunit 1 (COX1).